Here is a 409-residue protein sequence, read N- to C-terminus: MAVKDVKKVVLAYSGGLDTSVILRWLQTTYGCEVVTFTADLGQGEELEPARKKAEMFGVKEIFVEDLRETFVKDFVFPMFRANTLYEGQYLLGTSIARPLIAQRQIEIAEAVGADAVAHGATGKGNDQVRFELAYYALKPDVTVISPWREWDLTSRTRLLAFAEEHQIPIAKDKRGEAPFSVDANLLHSSSEGKLLEDPAVAPDEIVFQRTISPEAAPDVATEIAIDFVSGDPVALNGVTLSPATLLARLNELGKANGIGRLDLVENRFVGMKSRGIYETPGGTILLAAHRSMETITLDREAGHLKDSLMPRYAELIYNGFWFSPERRMLQALIDESQHSVTGRVRLKLYKGNVICVGRESPHSLYDTRVVTFEDDEGAYNQSDALGFIKLNALRLRLGAQIGRRGGAL.

Residues 12-20 (AYSGGLDTS) and alanine 39 each bind ATP. 2 residues coordinate L-citrulline: tyrosine 90 and serine 95. ATP is bound at residue glycine 120. Residues threonine 122, asparagine 126, and aspartate 127 each contribute to the L-aspartate site. Asparagine 126 lines the L-citrulline pocket. Positions 130, 181, 190, 266, and 278 each coordinate L-citrulline.

Belongs to the argininosuccinate synthase family. Type 1 subfamily. As to quaternary structure, homotetramer.

It is found in the cytoplasm. The catalysed reaction is L-citrulline + L-aspartate + ATP = 2-(N(omega)-L-arginino)succinate + AMP + diphosphate + H(+). Its pathway is amino-acid biosynthesis; L-arginine biosynthesis; L-arginine from L-ornithine and carbamoyl phosphate: step 2/3. The polypeptide is Argininosuccinate synthase (Gluconacetobacter diazotrophicus (strain ATCC 49037 / DSM 5601 / CCUG 37298 / CIP 103539 / LMG 7603 / PAl5)).